The chain runs to 888 residues: Pumilio homology domain family member 4 (888 aa).

3 positions are modified to phosphothreonine: Thr205, Thr212, and Thr252. Disordered stretches follow at residues 236 to 270 (KAKK…IPPT) and 467 to 551 (MNSA…RKIE). The span at 243-270 (GANNTAKTRTQSISFDNTPSSTSFIPPT) shows a compositional bias: polar residues. A Phosphoserine modification is found at Ser256. 2 stretches are compositionally biased toward low complexity: residues 478-499 (NNNS…YNNK) and 521-543 (NNNN…NSNS). The region spanning 539-888 (TNSNSAEKQR…RIIGMLHLDS (350 aa)) is the PUM-HD domain. Pumilio repeat units follow at residues 563-598 (QYIG…AIFE), 599-634 (ETKD…VLTK), 635-671 (ISSP…IVVD), 672-707 (SLRP…FIFD), 708-743 (AISD…NLCD), 744-783 (KLLA…KIVH), 784-821 (LLKP…EILN), and 823-861 (GGET…RLSE).

Functionally, is not essential for haploid growth, but may affect diploid formation. In Saccharomyces cerevisiae (strain ATCC 204508 / S288c) (Baker's yeast), this protein is Pumilio homology domain family member 4 (PUF4).